The sequence spans 461 residues: Asparagine--tRNA ligase (461 aa).

This sequence belongs to the class-II aminoacyl-tRNA synthetase family. In terms of assembly, homodimer.

Its subcellular location is the cytoplasm. The enzyme catalyses tRNA(Asn) + L-asparagine + ATP = L-asparaginyl-tRNA(Asn) + AMP + diphosphate + H(+). This chain is Asparagine--tRNA ligase, found in Oleidesulfovibrio alaskensis (strain ATCC BAA-1058 / DSM 17464 / G20) (Desulfovibrio alaskensis).